We begin with the raw amino-acid sequence, 353 residues long: WAT1-related protein At3g28100 (353 aa).

10 consecutive transmembrane segments (helical) span residues 12 to 32 (AVFLTAMLATETGVVGISTLF), 43 to 63 (YAFLGYSYLLASLLLLPSLFF), 81 to 101 (IGLLGLLGSMYVITGYIGIEY), 105 to 125 (TLASAISNITPALTFILAIIF), 137 to 157 (SVAKVMGTILSLIGALVVVLY), 187 to 207 (WLIGGALLTIRDIFVSVSFIL), 219 to 239 (FTVSFLYIVSVSIVTSMIGLV), 252 to 272 (FDITLITIVTMAIITSVYYVI), 283 to 303 (LYLAIFKPLSILIAVVMSAVF), and 308 to 328 (LYLGCLIGGLLITLGFYAVMW). Residues 27–155 (GISTLFKVAT…LSLIGALVVV (129 aa)) form the EamA domain.

This sequence belongs to the drug/metabolite transporter (DMT) superfamily. Plant drug/metabolite exporter (P-DME) (TC 2.A.7.4) family.

It is found in the membrane. In Arabidopsis thaliana (Mouse-ear cress), this protein is WAT1-related protein At3g28100.